Here is a 316-residue protein sequence, read N- to C-terminus: Apolipoprotein E (316 aa).

A signal peptide spans 1–18 (MKVLWVALVVALLAGCQA). Tandem repeats lie at residues 79–100 (VLMEETMKEVKAYREELEGQLA), 101–122 (PMAQETQARVSKELQAAQARLG), 123–144 (SDMEDLRNRLAQYRSEVQAMLG), 145–166 (QSTEELRARMASHLRKLRKRLL), 167–188 (RDADDLKKRLAVYQAGASEGAE), 189–210 (RSVSAIRERLRPLVEQSQSRAA), 211–232 (TLSTQVGQPLLDRAEAWRQKLH), and 233–254 (GRLEEVGVRAQDRLDKMRQQLE). The interval 79–254 (VLMEETMKEV…RLDKMRQQLE (176 aa)) is 8 X 22 AA approximate tandem repeats. Met-142 is modified (methionine sulfoxide). Ser-146 carries the post-translational modification Phosphoserine. The tract at residues 157 to 167 (HLRKLRKRLLR) is LDL and other lipoprotein receptors binding. Residue 161-164 (LRKR) coordinates heparin. The tract at residues 209–289 (AATLSTQVGQ…SWFEPLVEDM (81 aa)) is lipid-binding and lipoprotein association. Thr-211 carries O-linked (GalNAc...) threonine glycosylation. 228–235 (RQKLHGRL) contributes to the heparin binding site. Residues 265–316 (SQIRLQAEAFQARLRSWFEPLVEDMQRQWAGLVEKVQLALHLSPTSPPSENH) are homooligomerization. Residues 277-289 (RLRSWFEPLVEDM) are specificity for association with VLDL.

This sequence belongs to the apolipoprotein A1/A4/E family. In terms of assembly, homotetramer. May interact with ABCA1; functionally associated with ABCA1 in the biogenesis of HDLs. May interact with APP/A4 amyloid-beta peptide; the interaction is extremely stable in vitro but its physiological significance is unclear. May interact with MAPT. May interact with MAP2. In the cerebrospinal fluid, interacts with secreted SORL1. Interacts with PMEL; this allows the loading of PMEL luminal fragment on ILVs to induce fibril nucleation. Post-translationally, APOE exists as multiple glycosylated and sialylated glycoforms within cells and in plasma. The extent of glycosylation and sialylation are tissue and context specific. Glycated in plasma VLDL. In terms of processing, phosphorylated by FAM20C in the extracellular medium.

It is found in the secreted. The protein localises to the extracellular space. Its subcellular location is the extracellular matrix. It localises to the extracellular vesicle. The protein resides in the endosome. It is found in the multivesicular body. In terms of biological role, APOE is an apolipoprotein, a protein associating with lipid particles, that mainly functions in lipoprotein-mediated lipid transport between organs via the plasma and interstitial fluids. APOE is a core component of plasma lipoproteins and is involved in their production, conversion and clearance. Apolipoproteins are amphipathic molecules that interact both with lipids of the lipoprotein particle core and the aqueous environment of the plasma. As such, APOE associates with chylomicrons, chylomicron remnants, very low density lipoproteins (VLDL) and intermediate density lipoproteins (IDL) but shows a preferential binding to high-density lipoproteins (HDL). It also binds a wide range of cellular receptors including the LDL receptor/LDLR and the very low-density lipoprotein receptor/VLDLR that mediate the cellular uptake of the APOE-containing lipoprotein particles. Finally, APOE also has a heparin-binding activity and binds heparan-sulfate proteoglycans on the surface of cells, a property that supports the capture and the receptor-mediated uptake of APOE-containing lipoproteins by cells. This Ovis aries musimon (Mouflon) protein is Apolipoprotein E (APOE).